The chain runs to 672 residues: Beta-galactosidase BgaB (672 aa).

R109 provides a ligand contact to substrate. C113 is a Zn(2+) binding site. N147 lines the substrate pocket. E148 serves as the catalytic Proton donor. 3 residues coordinate Zn(2+): C156, C158, and C161. E303 (nucleophile) is an active-site residue. Residues W311 and 351-354 contribute to the substrate site; that span reads EKFH.

It belongs to the glycosyl hydrolase 42 family.

The catalysed reaction is Hydrolysis of terminal non-reducing beta-D-galactose residues in beta-D-galactosides.. The polypeptide is Beta-galactosidase BgaB (Geobacillus sp. (strain Y412MC61)).